The chain runs to 265 residues: MSRAMALFFVLCWIQDEIVLQVFSKVPYDPSFDETRTAVRSITKRDTQKSYSQQKSLNNAAFASGSNEREEHLAKIFDEILLQVFPKFPYDPSFNEATAVRSITKTDMRKGTSIAWNSPKPEYFLGSVDKIPDKDHLSEEKNFKESCLFDRDLREQLTTIDKETLQGAAKPDAHFRTMPCGQLLHFLQRNTIIAAVSGVAILMAIVLLLLGLASYIRKKQPSSPLANTTYNIFIMDGKTWWHNSEEKNFTKLAKKQKQLKSSSCV.

Residues 1–20 form the signal peptide; that stretch reads MSRAMALFFVLCWIQDEIVL. The helical transmembrane segment at 192–212 threads the bilayer; sequence IIAAVSGVAILMAIVLLLLGL.

It is found in the membrane. This is an uncharacterized protein from Homo sapiens (Human).